The chain runs to 344 residues: Lipopolysaccharide heptosyltransferase 3 (344 aa).

Belongs to the glycosyltransferase 9 family.

It catalyses the reaction an L-alpha-D-Hep-(1-&gt;3)-4-O-phospho-L-alpha-D-Hep-(1-&gt;5)-[alpha-Kdo-(2-&gt;4)]-alpha-Kdo-(2-&gt;6)-lipid A + ADP-L-glycero-beta-D-manno-heptose = an L-alpha-D-Hep-(1-&gt;7)-L-alpha-D-Hep-(1-&gt;3)-4-O-phospho-L-alpha-D-Hep-(1-&gt;5)-[alpha-Kdo-(2-&gt;4)]-alpha-Kdo-(2-&gt;6)-lipid A + ADP + H(+). The catalysed reaction is L-alpha-D-Hep-(1-&gt;3)-4-O-phospho-L-alpha-D-Hep-(1-&gt;5)-[alpha-Kdo-(2-&gt;4)]-alpha-Kdo-(2-&gt;6)-lipid A (E. coli) + ADP-L-glycero-beta-D-manno-heptose = L-alpha-D-Hep-(1-&gt;7)-L-alpha-D-Hep-(1-&gt;3)-4-O-phospho-L-alpha-D-Hep-(1-&gt;5)-[alpha-Kdo-(2-&gt;4)]-alpha-Kdo-(2-&gt;6)-lipid A (E. coli) + ADP + H(+). It functions in the pathway bacterial outer membrane biogenesis; LPS core biosynthesis. Functionally, glycosyltransferase involved in the biosynthesis of the core oligosaccharide region of lipopolysaccharide (LPS). Catalyzes the addition of the third heptose unit (HepIII) to the second heptose unit (HepII) of the phospho-Hep2-Kdo2-lipid A module. This Escherichia coli (strain K12) protein is Lipopolysaccharide heptosyltransferase 3.